We begin with the raw amino-acid sequence, 37 residues long: Large ribosomal subunit protein bL36 (37 aa).

Belongs to the bacterial ribosomal protein bL36 family.

In Clostridioides difficile (strain 630) (Peptoclostridium difficile), this protein is Large ribosomal subunit protein bL36.